The following is a 632-amino-acid chain: Fem-3 mRNA-binding factor 2 (632 aa).

The span at 1 to 11 (MDQSKMRRTNQ) shows a compositional bias: basic residues. Residues 1-37 (MDQSKMRRTNQFRKTSQKPPSTGIDSYPTPAQSPMAQ) are disordered. The span at 12–35 (FRKTSQKPPSTGIDSYPTPAQSPM) shows a compositional bias: polar residues. The region spanning 162 to 566 (TRSNNVLPTW…KMIETLANLR (405 aa)) is the PUM-HD domain. 8 Pumilio repeats span residues 187–225 (EVLD…QLFE), 226–264 (QVIG…GYTK), 271–307 (NFIS…KLVQ), 308–332 (ALPR…QKVV), 345–384 (DFVA…DLTS), 400–436 (SVTN…CIIE), 438–473 (CLMR…EMMD), and 484–521 (DTGK…RQTK). Residues 609 to 632 (MLEPRSNKSSVSVKFSSSGSHGDD) are disordered. A compositionally biased stretch (low complexity) spans 615–632 (NKSSVSVKFSSSGSHGDD).

Interacts (via C-terminus) with gld-3 isoform A in an RNA-independent manner. Interacts with dlc-1, and is required for the localization of fbf-2 to P granules. Interacts (via RNA-binding domain) with lst-1, probably displaces bound auto-inhibitory C-terminal tail and alters its RNA-binding affinity. In terms of tissue distribution, expressed specifically in the germline (at protein level).

Its subcellular location is the cytoplasm. The protein resides in the cytoplasmic granule. RNA-binding protein that binds to the consensus sequence 5'-UGUGCCAUA-3' in mRNA 3'-UTRs. Involved in the control of stem cells and sex determination in the C.elegans hermaphrodite germline. May also play a role in the hermaphrodite germline proliferation and oogenesis. By binding to the 3'-UTR, represses phosphatase lip-1 expression in the distal part of the germline mitotic zone. Binds specifically to the regulatory region of fem-3 3'-UTR and mediates the sperm/oocyte switch. Negatively regulates gld-3 expression possibly by directly binding to two sites within the gld-3 isoform b 3'-UTR. Suppresses germline tumor formation by preventing the dedifferentiation of secondary spermatocytes. C-terminal disordered region probably auto-inhibits RNA binding; auto-inhibition may be reversed by interaction with lst-1. In Caenorhabditis elegans, this protein is Fem-3 mRNA-binding factor 2.